The primary structure comprises 140 residues: Class I hydrophobin C (140 aa).

The signal sequence occupies residues 1-23 (MKFFVPAFLFAATAMALPGSGSA). Cystine bridges form between cysteine 41-cysteine 114, cysteine 49-cysteine 108, cysteine 50-cysteine 85, and cysteine 115-cysteine 133.

This sequence belongs to the fungal hydrophobin family.

The protein localises to the secreted. Its subcellular location is the cell wall. In terms of biological role, aerial growth, conidiation, and dispersal of filamentous fungi in the environment rely upon a capability of their secreting small amphipathic proteins called hydrophobins (HPBs) with low sequence identity. Class I can self-assemble into an outermost layer of rodlet bundles on aerial cell surfaces, conferring cellular hydrophobicity that supports fungal growth, development and dispersal; whereas Class II form highly ordered films at water-air interfaces through intermolecular interactions but contribute nothing to the rodlet structure. In P.expansum, hydrophobins contribute to germination, tolerance to cold stress and mycotoxins patulin and citrinin production. HfbC is involved in the virulence on apple. This chain is Class I hydrophobin C, found in Penicillium expansum (Blue mold rot fungus).